The sequence spans 252 residues: 3-deoxy-manno-octulosonate cytidylyltransferase 2 (252 aa).

It belongs to the KdsB family.

The protein localises to the cytoplasm. The catalysed reaction is 3-deoxy-alpha-D-manno-oct-2-ulosonate + CTP = CMP-3-deoxy-beta-D-manno-octulosonate + diphosphate. Its pathway is nucleotide-sugar biosynthesis; CMP-3-deoxy-D-manno-octulosonate biosynthesis; CMP-3-deoxy-D-manno-octulosonate from 3-deoxy-D-manno-octulosonate and CTP: step 1/1. The protein operates within bacterial outer membrane biogenesis; lipopolysaccharide biosynthesis. In terms of biological role, activates KDO (a required 8-carbon sugar) for incorporation into bacterial lipopolysaccharide in Gram-negative bacteria. This is 3-deoxy-manno-octulosonate cytidylyltransferase 2 from Actinobacillus pleuropneumoniae serotype 5b (strain L20).